We begin with the raw amino-acid sequence, 320 residues long: ATP-dependent 6-phosphofructokinase (320 aa).

Gly12 serves as a coordination point for ATP. Position 22 to 26 (22 to 26 (RSVIR)) interacts with ADP. Residues 73–74 (RF) and 103–106 (GDGS) each bind ATP. Asp104 serves as a coordination point for Mg(2+). Position 126-128 (126-128 (TID)) interacts with substrate. Asp128 acts as the Proton acceptor in catalysis. Arg155 is an ADP binding site. Residues Arg163 and 170-172 (MGR) each bind substrate. ADP is bound by residues 186 to 188 (GAE) and 214 to 216 (KRH). Substrate is bound by residues Glu223, Arg244, and 250-253 (HIQR).

This sequence belongs to the phosphofructokinase type A (PFKA) family. ATP-dependent PFK group I subfamily. Prokaryotic clade 'B1' sub-subfamily. In terms of assembly, homotetramer. Requires Mg(2+) as cofactor.

The protein resides in the cytoplasm. The catalysed reaction is beta-D-fructose 6-phosphate + ATP = beta-D-fructose 1,6-bisphosphate + ADP + H(+). It functions in the pathway carbohydrate degradation; glycolysis; D-glyceraldehyde 3-phosphate and glycerone phosphate from D-glucose: step 3/4. Allosterically activated by ADP and other diphosphonucleosides, and allosterically inhibited by phosphoenolpyruvate. Functionally, catalyzes the phosphorylation of D-fructose 6-phosphate to fructose 1,6-bisphosphate by ATP, the first committing step of glycolysis. The polypeptide is ATP-dependent 6-phosphofructokinase (Tolumonas auensis (strain DSM 9187 / NBRC 110442 / TA 4)).